The sequence spans 131 residues: Phosphoribosyl-AMP cyclohydrolase (131 aa).

Asp-76 contacts Mg(2+). Cys-77 contacts Zn(2+). Residues Asp-78 and Asp-80 each coordinate Mg(2+). Positions 94 and 101 each coordinate Zn(2+).

The protein belongs to the PRA-CH family. As to quaternary structure, homodimer. It depends on Mg(2+) as a cofactor. Zn(2+) serves as cofactor.

It is found in the cytoplasm. It catalyses the reaction 1-(5-phospho-beta-D-ribosyl)-5'-AMP + H2O = 1-(5-phospho-beta-D-ribosyl)-5-[(5-phospho-beta-D-ribosylamino)methylideneamino]imidazole-4-carboxamide. It functions in the pathway amino-acid biosynthesis; L-histidine biosynthesis; L-histidine from 5-phospho-alpha-D-ribose 1-diphosphate: step 3/9. Catalyzes the hydrolysis of the adenine ring of phosphoribosyl-AMP. The chain is Phosphoribosyl-AMP cyclohydrolase from Stutzerimonas stutzeri (strain A1501) (Pseudomonas stutzeri).